We begin with the raw amino-acid sequence, 278 residues long: Undecaprenyl-diphosphatase 1 (278 aa).

Transmembrane regions (helical) follow at residues 1-21 (MFFG…TEFL), 43-63 (AFTT…VVLL), 83-103 (IWAT…IGFL), 112-132 (LMNW…FIFI), 192-212 (FSFF…IGSY), 224-244 (IVIL…VIKW), and 257-277 (FGWY…IGII).

The protein belongs to the UppP family.

It localises to the cell membrane. The enzyme catalyses di-trans,octa-cis-undecaprenyl diphosphate + H2O = di-trans,octa-cis-undecaprenyl phosphate + phosphate + H(+). Functionally, catalyzes the dephosphorylation of undecaprenyl diphosphate (UPP). Confers resistance to bacitracin. The protein is Undecaprenyl-diphosphatase 1 of Oenococcus oeni (strain ATCC BAA-331 / PSU-1).